Here is a 130-residue protein sequence, read N- to C-terminus: Large ribosomal subunit protein bL12 (130 aa).

It belongs to the bacterial ribosomal protein bL12 family. Homodimer. Part of the ribosomal stalk of the 50S ribosomal subunit. Forms a multimeric L10(L12)X complex, where L10 forms an elongated spine to which 2 to 4 L12 dimers bind in a sequential fashion. Binds GTP-bound translation factors.

Functionally, forms part of the ribosomal stalk which helps the ribosome interact with GTP-bound translation factors. Is thus essential for accurate translation. The protein is Large ribosomal subunit protein bL12 of Nostoc sp. (strain PCC 7120 / SAG 25.82 / UTEX 2576).